A 517-amino-acid polypeptide reads, in one-letter code: UDP-N-acetylmuramoyl-L-alanyl-D-glutamate--2,6-diaminopimelate ligase (517 aa).

UDP-N-acetyl-alpha-D-muramoyl-L-alanyl-D-glutamate-binding residues include Leu-34 and Ser-36. 122–128 is an ATP binding site; it reads GTSGKTT. Residues 164 to 165, Ser-191, and Arg-199 each bind UDP-N-acetyl-alpha-D-muramoyl-L-alanyl-D-glutamate; that span reads TT. An N6-carboxylysine modification is found at Lys-231. Residues Arg-394, 418–421, Gly-476, and Glu-480 contribute to the meso-2,6-diaminopimelate site; that span reads DNPR. A Meso-diaminopimelate recognition motif motif is present at residues 418–421; sequence DNPR.

This sequence belongs to the MurCDEF family. MurE subfamily. It depends on Mg(2+) as a cofactor. Carboxylation is probably crucial for Mg(2+) binding and, consequently, for the gamma-phosphate positioning of ATP.

It localises to the cytoplasm. The catalysed reaction is UDP-N-acetyl-alpha-D-muramoyl-L-alanyl-D-glutamate + meso-2,6-diaminopimelate + ATP = UDP-N-acetyl-alpha-D-muramoyl-L-alanyl-gamma-D-glutamyl-meso-2,6-diaminopimelate + ADP + phosphate + H(+). It participates in cell wall biogenesis; peptidoglycan biosynthesis. Functionally, catalyzes the addition of meso-diaminopimelic acid to the nucleotide precursor UDP-N-acetylmuramoyl-L-alanyl-D-glutamate (UMAG) in the biosynthesis of bacterial cell-wall peptidoglycan. In Corynebacterium glutamicum (strain ATCC 13032 / DSM 20300 / JCM 1318 / BCRC 11384 / CCUG 27702 / LMG 3730 / NBRC 12168 / NCIMB 10025 / NRRL B-2784 / 534), this protein is UDP-N-acetylmuramoyl-L-alanyl-D-glutamate--2,6-diaminopimelate ligase.